A 234-amino-acid chain; its full sequence is Elongation factor Tu (234 aa).

The tr-type G domain maps to 1–125 (KNMITGAAQM…EVDAFIPTPE (125 aa)). Residue 47-50 (NKQD) coordinates GTP.

The protein belongs to the TRAFAC class translation factor GTPase superfamily. Classic translation factor GTPase family. EF-Tu/EF-1A subfamily. Monomer.

The protein resides in the cytoplasm. It carries out the reaction GTP + H2O = GDP + phosphate + H(+). Functionally, GTP hydrolase that promotes the GTP-dependent binding of aminoacyl-tRNA to the A-site of ribosomes during protein biosynthesis. This is Elongation factor Tu (tufA) from Prochlorothrix hollandica.